A 290-amino-acid polypeptide reads, in one-letter code: 33 kDa chaperonin (290 aa).

Cystine bridges form between C235–C237 and C268–C271.

Belongs to the HSP33 family. In terms of processing, under oxidizing conditions two disulfide bonds are formed involving the reactive cysteines. Under reducing conditions zinc is bound to the reactive cysteines and the protein is inactive.

Its subcellular location is the cytoplasm. Redox regulated molecular chaperone. Protects both thermally unfolding and oxidatively damaged proteins from irreversible aggregation. Plays an important role in the bacterial defense system toward oxidative stress. The chain is 33 kDa chaperonin from Streptococcus pyogenes serotype M2 (strain MGAS10270).